Consider the following 301-residue polypeptide: Acetylglutamate kinase (301 aa).

Substrate is bound by residues 68-69 (GG), R90, and N195.

This sequence belongs to the acetylglutamate kinase family. ArgB subfamily.

It localises to the cytoplasm. It carries out the reaction N-acetyl-L-glutamate + ATP = N-acetyl-L-glutamyl 5-phosphate + ADP. It participates in amino-acid biosynthesis; L-arginine biosynthesis; N(2)-acetyl-L-ornithine from L-glutamate: step 2/4. Catalyzes the ATP-dependent phosphorylation of N-acetyl-L-glutamate. The sequence is that of Acetylglutamate kinase from Pseudomonas putida (strain W619).